Consider the following 384-residue polypeptide: Odorant receptor 33c (384 aa).

The Cytoplasmic segment spans residues 1 to 35; the sequence is MVIIDSLSFYRPFWICMRLLVPTFFKDSSRPVQLY. A helical membrane pass occupies residues 36 to 56; that stretch reads VVLLHILVTLWFPLHLLLHLL. Residues 57–63 lie on the Extracellular side of the membrane; that stretch reads LLPSTAE. The chain crosses the membrane as a helical span at residues 64–84; it reads FFKNLTMSLTCVACSLKHVAH. Residues 85–128 lie on the Cytoplasmic side of the membrane; that stretch reads LYHLPQIVEIESLIEQLDTFIASEQEHRYYRDHVHCHARRFTRC. A helical transmembrane segment spans residues 129–149; the sequence is LYISFGMIYALFLFGVFVQVI. The Extracellular segment spans residues 150–169; the sequence is SGNWELLYPAYFPFDLESNR. Residues 170-190 traverse the membrane as a helical segment; sequence FLGAVALGYQVFSMLVEGFQG. Residues 191–251 are Cytoplasmic-facing; it reads LGNDTYTPLT…LVRFHNLVSR (61 aa). The helical transmembrane segment at 252–272 threads the bilayer; sequence TISEVQLVQLGGCGATLCIIV. The Extracellular segment spans residues 273–274; the sequence is SY. The helical transmembrane segment at 275–295 threads the bilayer; that stretch reads MLFFVGDTISLVYYLVFFGVV. The Cytoplasmic segment spans residues 296–358; sequence CVQLFPSCYF…WIIKAGGLIE (63 aa). Residues 359–379 traverse the membrane as a helical segment; sequence LNLNAFFATLKMAYSLFAVVV. The Extracellular segment spans residues 380 to 384; that stretch reads RAKGI.

Belongs to the insect chemoreceptor superfamily. Heteromeric odorant receptor channel (TC 1.A.69) family. Or2a subfamily. In terms of assembly, interacts with Orco. Complexes exist early in the endomembrane system in olfactory sensory neurons (OSNs), coupling these complexes to the conserved ciliary trafficking pathway. As to expression, expressed in the antenna and in a subset of 18 olfactory receptor neurons in the maxillary palp.

It localises to the cell membrane. Odorant receptor which mediates acceptance or avoidance behavior, depending on its substrates. The odorant receptor repertoire encodes a large collection of odor stimuli that vary widely in identity, intensity, and duration. May form a complex with Orco to form odorant-sensing units, providing sensitive and prolonged odorant signaling and calcium permeability. In Drosophila melanogaster (Fruit fly), this protein is Odorant receptor 33c (Or33c).